Reading from the N-terminus, the 279-residue chain is Alcohol dehydrogenase-related 31 kDa protein (279 aa).

11-34 lines the NAD(+) pocket; the sequence is YVADCGGIALETSKVLMTKNIAKL. Residue Ser139 coordinates substrate. The Proton acceptor role is filled by Tyr152.

This sequence belongs to the short-chain dehydrogenases/reductases (SDR) family.

The protein is Alcohol dehydrogenase-related 31 kDa protein (Adhr) of Drosophila madeirensis (Fruit fly).